Consider the following 315-residue polypeptide: Methionyl-tRNA formyltransferase (315 aa).

An N-terminal domain region spans residues 2 to 189 (SESLRIIFAG…LITTLKQLAD (188 aa)). 113–116 (SLLP) is a binding site for (6S)-5,6,7,8-tetrahydrofolate. A C-terminal domain region spans residues 210–315 (KEEARIDWSL…EWFVPGNRLA (106 aa)).

This sequence belongs to the Fmt family.

It carries out the reaction L-methionyl-tRNA(fMet) + (6R)-10-formyltetrahydrofolate = N-formyl-L-methionyl-tRNA(fMet) + (6S)-5,6,7,8-tetrahydrofolate + H(+). Attaches a formyl group to the free amino group of methionyl-tRNA(fMet). The formyl group appears to play a dual role in the initiator identity of N-formylmethionyl-tRNA by promoting its recognition by IF2 and preventing the misappropriation of this tRNA by the elongation apparatus. The chain is Methionyl-tRNA formyltransferase from Escherichia coli O6:H1 (strain CFT073 / ATCC 700928 / UPEC).